The following is a 160-amino-acid chain: 6,7-dimethyl-8-ribityllumazine synthase (160 aa).

5-amino-6-(D-ribitylamino)uracil is bound by residues Trp28, Ala59–Glu61, and Cys81–Ile83. Glu86–Thr87 is a (2S)-2-hydroxy-3-oxobutyl phosphate binding site. His89 serves as the catalytic Proton donor. Asn114 contacts 5-amino-6-(D-ribitylamino)uracil. Position 128 (Arg128) interacts with (2S)-2-hydroxy-3-oxobutyl phosphate.

This sequence belongs to the DMRL synthase family.

It carries out the reaction (2S)-2-hydroxy-3-oxobutyl phosphate + 5-amino-6-(D-ribitylamino)uracil = 6,7-dimethyl-8-(1-D-ribityl)lumazine + phosphate + 2 H2O + H(+). It functions in the pathway cofactor biosynthesis; riboflavin biosynthesis; riboflavin from 2-hydroxy-3-oxobutyl phosphate and 5-amino-6-(D-ribitylamino)uracil: step 1/2. Functionally, catalyzes the formation of 6,7-dimethyl-8-ribityllumazine by condensation of 5-amino-6-(D-ribitylamino)uracil with 3,4-dihydroxy-2-butanone 4-phosphate. This is the penultimate step in the biosynthesis of riboflavin. The chain is 6,7-dimethyl-8-ribityllumazine synthase from Corynebacterium urealyticum (strain ATCC 43042 / DSM 7109).